We begin with the raw amino-acid sequence, 274 residues long: Putative phosphoenolpyruvate synthase regulatory protein (274 aa).

157–164 contributes to the ADP binding site; that stretch reads GVSRCGKT.

It belongs to the pyruvate, phosphate/water dikinase regulatory protein family. PSRP subfamily.

It carries out the reaction [pyruvate, water dikinase] + ADP = [pyruvate, water dikinase]-phosphate + AMP + H(+). The catalysed reaction is [pyruvate, water dikinase]-phosphate + phosphate + H(+) = [pyruvate, water dikinase] + diphosphate. Functionally, bifunctional serine/threonine kinase and phosphorylase involved in the regulation of the phosphoenolpyruvate synthase (PEPS) by catalyzing its phosphorylation/dephosphorylation. The polypeptide is Putative phosphoenolpyruvate synthase regulatory protein (Bordetella avium (strain 197N)).